A 184-amino-acid polypeptide reads, in one-letter code: Small ribosomal subunit protein uS4 (184 aa).

One can recognise an S4 RNA-binding domain in the interval 108 to 172 (RRLQTQVHRL…SPMTKESHPE (65 aa)). The segment at 163 to 184 (SPMTKESHPERPAQIAASVVEE) is disordered.

This sequence belongs to the universal ribosomal protein uS4 family. In terms of assembly, part of the 30S ribosomal subunit. Contacts protein S5. The interaction surface between S4 and S5 is involved in control of translational fidelity.

Its function is as follows. One of the primary rRNA binding proteins, it binds directly to 16S rRNA where it nucleates assembly of the body of the 30S subunit. In terms of biological role, with S5 and S12 plays an important role in translational accuracy. This chain is Small ribosomal subunit protein uS4, found in Methanococcoides burtonii (strain DSM 6242 / NBRC 107633 / OCM 468 / ACE-M).